The following is a 951-amino-acid chain: Valine--tRNA ligase (951 aa).

The 'HIGH' region signature appears at 42–52; the sequence is PNVTGSLHMGH. Residues 554 to 558 carry the 'KMSKS' region motif; it reads KMSKS. Residue Lys557 participates in ATP binding. Positions 880 to 914 form a coiled coil; sequence AGLIDKAAELDRLAKEVAKLEAEIGRIESKLSNEG.

It belongs to the class-I aminoacyl-tRNA synthetase family. ValS type 1 subfamily. As to quaternary structure, monomer.

The protein localises to the cytoplasm. It catalyses the reaction tRNA(Val) + L-valine + ATP = L-valyl-tRNA(Val) + AMP + diphosphate. Its function is as follows. Catalyzes the attachment of valine to tRNA(Val). As ValRS can inadvertently accommodate and process structurally similar amino acids such as threonine, to avoid such errors, it has a 'posttransfer' editing activity that hydrolyzes mischarged Thr-tRNA(Val) in a tRNA-dependent manner. The sequence is that of Valine--tRNA ligase from Pectobacterium atrosepticum (strain SCRI 1043 / ATCC BAA-672) (Erwinia carotovora subsp. atroseptica).